A 269-amino-acid chain; its full sequence is Tryptophan synthase alpha chain (269 aa).

Active-site proton acceptor residues include Glu-49 and Asp-60.

It belongs to the TrpA family. In terms of assembly, tetramer of two alpha and two beta chains.

It carries out the reaction (1S,2R)-1-C-(indol-3-yl)glycerol 3-phosphate + L-serine = D-glyceraldehyde 3-phosphate + L-tryptophan + H2O. Its pathway is amino-acid biosynthesis; L-tryptophan biosynthesis; L-tryptophan from chorismate: step 5/5. In terms of biological role, the alpha subunit is responsible for the aldol cleavage of indoleglycerol phosphate to indole and glyceraldehyde 3-phosphate. The chain is Tryptophan synthase alpha chain from Pseudomonas putida (Arthrobacter siderocapsulatus).